A 122-amino-acid polypeptide reads, in one-letter code: Large ribosomal subunit protein uL14 (122 aa).

The protein belongs to the universal ribosomal protein uL14 family. In terms of assembly, part of the 50S ribosomal subunit. Forms a cluster with proteins L3 and L19. In the 70S ribosome, L14 and L19 interact and together make contacts with the 16S rRNA in bridges B5 and B8.

Binds to 23S rRNA. Forms part of two intersubunit bridges in the 70S ribosome. This chain is Large ribosomal subunit protein uL14, found in Shewanella denitrificans (strain OS217 / ATCC BAA-1090 / DSM 15013).